We begin with the raw amino-acid sequence, 172 residues long: Photosystem I assembly protein Ycf3 (172 aa).

TPR repeat units follow at residues 35 to 70 (AFTY…EIDP), 74 to 107 (SYIL…NPFL), and 122 to 155 (GEQA…TPGN).

The protein belongs to the Ycf3 family.

It localises to the plastid. The protein localises to the chloroplast thylakoid membrane. Functionally, essential for the assembly of the photosystem I (PSI) complex. May act as a chaperone-like factor to guide the assembly of the PSI subunits. This chain is Photosystem I assembly protein Ycf3, found in Sorghum bicolor (Sorghum).